We begin with the raw amino-acid sequence, 270 residues long: Acyl-[acyl-carrier-protein]--UDP-N-acetylglucosamine O-acyltransferase (270 aa).

It belongs to the transferase hexapeptide repeat family. LpxA subfamily. As to quaternary structure, homotrimer.

Its subcellular location is the cytoplasm. The catalysed reaction is a (3R)-hydroxyacyl-[ACP] + UDP-N-acetyl-alpha-D-glucosamine = a UDP-3-O-[(3R)-3-hydroxyacyl]-N-acetyl-alpha-D-glucosamine + holo-[ACP]. It functions in the pathway glycolipid biosynthesis; lipid IV(A) biosynthesis; lipid IV(A) from (3R)-3-hydroxytetradecanoyl-[acyl-carrier-protein] and UDP-N-acetyl-alpha-D-glucosamine: step 1/6. Its function is as follows. Involved in the biosynthesis of lipid A, a phosphorylated glycolipid that anchors the lipopolysaccharide to the outer membrane of the cell. This chain is Acyl-[acyl-carrier-protein]--UDP-N-acetylglucosamine O-acyltransferase, found in Sinorhizobium medicae (strain WSM419) (Ensifer medicae).